Consider the following 309-residue polypeptide: MTDTTTTTTTDANKLVLEKSANSSGLEVDLHPLVLINISDHFTRTKVQSNYQDNCRVIGVILGVQNGRNVEICNSFEMVYATVDKQLVLDIEYLRKKYEQLFPLYDLLGWYSTGSQVSKDDILLHKQISEHNESPLYLMLDTDSPKSKDLPVIIYESELHIVNDEPTTIFVKTPYKIQTGEAERIGVNHIAKVTPSGSEGSGLTSHLFTMHNAISMLNIRVKALSDYLQAVKEKRLPYEQNILRKASSLCNQLPTIDTHDFKKSYLQEYNDVLLVTYLASITKTSASLNDTIDKYLVSNEKQSKRRFYQ.

The MPN domain maps to 28 to 161 (VDLHPLVLIN…VIIYESELHI (134 aa)).

The protein belongs to the peptidase M67A family. CSN6 subfamily. Component of the CSN complex. The holocomplex is comprised of 8 subunits csn1-8. In the complex, it probably interacts directly with csn2, csn5 and csn7.

It localises to the cytoplasm. The protein localises to the nucleus. The protein resides in the cytoplasmic vesicle. It is found in the phagosome. Component of the COP9 signalosome complex (CSN), a complex involved in various cellular and developmental processes. The CSN complex is an essential regulator of the ubiquitin (Ubl) conjugation pathway by mediating the deneddylation of the cullin subunits of E3 ligase complexes, leading to modify the Ubl ligase activity. The protein is COP9 signalosome complex subunit 6 (csn6) of Dictyostelium discoideum (Social amoeba).